A 490-amino-acid chain; its full sequence is UDP-glycosyltransferase 73C7 (490 aa).

Residues Ser-291, 351 to 353 (APQ), 368 to 376 (HCGWNSTLE), and 390 to 393 (FAEQ) contribute to the UDP-alpha-D-glucose site.

The protein belongs to the UDP-glycosyltransferase family.

In Arabidopsis thaliana (Mouse-ear cress), this protein is UDP-glycosyltransferase 73C7 (UGT73C7).